The chain runs to 231 residues: Response regulator MprA (231 aa).

One can recognise a Response regulatory domain in the interval 4–118; it reads RILVVDDDRA…ELLARMRALL (115 aa). D48 bears the 4-aspartylphosphate mark. A DNA-binding region (ompR/PhoB-type) is located at residues 130 to 228; sequence SAAMTFSDLS…VRGVGYVLRE (99 aa).

Post-translationally, phosphorylated and dephosphorylated by MprB.

It is found in the cytoplasm. Member of the two-component regulatory system MprB/MprA which contributes to maintaining a balance among several systems involved in stress resistance and is required for establishment and maintenance of persistent infection in the host. Functions as a transcriptional regulator that recognizes a 19-bp nucleotide motif comprizing two loosely conserved 8-bp direct DNA-binding motif repeats separated by a 3-bp spacer region. The protein is Response regulator MprA (mprA) of Mycolicibacterium vanbaalenii (strain DSM 7251 / JCM 13017 / BCRC 16820 / KCTC 9966 / NRRL B-24157 / PYR-1) (Mycobacterium vanbaalenii).